Reading from the N-terminus, the 57-residue chain is Large ribosomal subunit protein bL33 (57 aa).

This sequence belongs to the bacterial ribosomal protein bL33 family.

This is Large ribosomal subunit protein bL33 from Shewanella halifaxensis (strain HAW-EB4).